The following is a 270-amino-acid chain: Putative phosphoenolpyruvate synthase regulatory protein (270 aa).

Position 150–157 (150–157 (GVSRCGKT)) interacts with ADP.

It belongs to the pyruvate, phosphate/water dikinase regulatory protein family. PSRP subfamily.

It catalyses the reaction [pyruvate, water dikinase] + ADP = [pyruvate, water dikinase]-phosphate + AMP + H(+). It carries out the reaction [pyruvate, water dikinase]-phosphate + phosphate + H(+) = [pyruvate, water dikinase] + diphosphate. Bifunctional serine/threonine kinase and phosphorylase involved in the regulation of the phosphoenolpyruvate synthase (PEPS) by catalyzing its phosphorylation/dephosphorylation. This chain is Putative phosphoenolpyruvate synthase regulatory protein, found in Shewanella pealeana (strain ATCC 700345 / ANG-SQ1).